The following is a 175-amino-acid chain: Adenylate kinase isoenzyme 6 homolog (175 aa).

ATP is bound by residues G18, G20, K21, T22, and T23. The segment at C38–V61 is NMPbind. Residues S113 to E123 form an LID region. R114 is an ATP binding site.

It belongs to the adenylate kinase family. AK6 subfamily. As to quaternary structure, interacts with small ribosomal subunit protein uS11. Not a structural component of 43S pre-ribosomes, but transiently interacts with them by binding to uS11.

It localises to the cytoplasm. The protein localises to the nucleus. The enzyme catalyses AMP + ATP = 2 ADP. It carries out the reaction ATP + H2O = ADP + phosphate + H(+). Functionally, broad-specificity nucleoside monophosphate (NMP) kinase that catalyzes the reversible transfer of the terminal phosphate group between nucleoside triphosphates and monophosphates. Also has ATPase activity. Involved in the late cytoplasmic maturation steps of the 40S ribosomal particles, specifically 18S rRNA maturation. While NMP activity is not required for ribosome maturation, ATPase activity is. Associates transiently with small ribosomal subunit protein uS11. ATP hydrolysis breaks the interaction with uS11. May temporarily remove uS11 from the ribosome to enable a conformational change of the ribosomal RNA that is needed for the final maturation step of the small ribosomal subunit. Its NMP activity may have a role in nuclear energy homeostasis. This is Adenylate kinase isoenzyme 6 homolog (fap7) from Schizosaccharomyces pombe (strain 972 / ATCC 24843) (Fission yeast).